A 587-amino-acid polypeptide reads, in one-letter code: Branchpoint-bridging protein (587 aa).

Residues 1–16 (MLNSRSVGSTGSNNTP) show a composition bias toward polar residues. 2 disordered regions span residues 1-64 (MLNS…DGRG) and 121-142 (GDVVPHHRERSPSPPPQYDNHG). The span at 44–64 (DSYKSNSRMDHRPDGYHDGRG) shows a compositional bias: basic and acidic residues. Serine 131 and serine 133 each carry phosphoserine. In terms of domain architecture, KH spans 191 to 271 (YVPVKDYPEI…DKINHAIKLI (81 aa)). CCHC-type zinc fingers lie at residues 309-326 (QVCQNCGNVGHRRFDCPE) and 334-351 (IVCRHCGSIGHIARDCPV). Disordered regions lie at residues 375–490 (GGGS…PGTS) and 551–587 (IPGATAPPGAPGSYNTSESSNLNAPPGVSMPNGYSNR). The span at 379–399 (AISNGNGEPQKSIEFSESGAA) shows a compositional bias: polar residues. A compositionally biased stretch (low complexity) spans 410–454 (AAASTSVSSSTSSPAPWAKPASSAAPSNPAPWQQPAAPQSAPALS). Composition is skewed to polar residues over residues 465-483 (QPTQQSAVQPSNLVPSQNA) and 563-573 (SYNTSESSNLN).

This sequence belongs to the BBP/SF1 family. U2AF large subunit (u2af59), U2AF small subunit (u2af23) and bpb1 interact to form a complex required for complex A formation.

The protein resides in the cytoplasm. Its subcellular location is the nucleus. Its function is as follows. Necessary for the splicing of pre-mRNA. The BPB1(SF1)-u2af59-u2af23 complex has a role in the recognition of the branch site (5'-UACUAAC-3'), the pyrimidine tract and the 3'-splice site at the 3'-end of introns. The polypeptide is Branchpoint-bridging protein (bpb1) (Schizosaccharomyces pombe (strain 972 / ATCC 24843) (Fission yeast)).